The primary structure comprises 226 residues: Ribonuclease 3 (226 aa).

The RNase III domain maps to 5-127 (IFQRGDPIGH…IVAAIYLDCG (123 aa)). A Mg(2+)-binding site is contributed by E40. The active site involves D44. D113 and E116 together coordinate Mg(2+). E116 is an active-site residue. A DRBM domain is found at 154-224 (DPKTRLQEWL…ATLVIAQLDS (71 aa)).

It belongs to the ribonuclease III family. Homodimer. Requires Mg(2+) as cofactor.

The protein localises to the cytoplasm. It catalyses the reaction Endonucleolytic cleavage to 5'-phosphomonoester.. In terms of biological role, digests double-stranded RNA. Involved in the processing of primary rRNA transcript to yield the immediate precursors to the large and small rRNAs (23S and 16S). Processes some mRNAs, and tRNAs when they are encoded in the rRNA operon. Processes pre-crRNA and tracrRNA of type II CRISPR loci if present in the organism. The polypeptide is Ribonuclease 3 (Xanthomonas oryzae pv. oryzae (strain KACC10331 / KXO85)).